A 304-amino-acid polypeptide reads, in one-letter code: MAQVKRIRRSISGILVLDKPRGMSSNQALQKVRWLLNAEKAGHTGSLDPLATGVLPLCFGEATKFSQYLLDADKGYETVMRMGITTTTGDAEGEMLAEREVTVGRDDLEQALPRFRGDIEQVPPMYSALKKDGQPLYKLARAGEVVEREARSVTITRLDLLSFEPPCATLAVSCSKGTYVRTLVEDLGQVLGCGAHVAALRRTQAGPFVLAQAITLETLERVHAEGGPEALDQFLMPEDSGLLHWPVLQLSEHSAYYWLHGQPVRAPEAPKFGWLRVQDHTGRFIGIGEVTDDGRIAPRRLIRS.

Aspartate 48 acts as the Nucleophile in catalysis.

This sequence belongs to the pseudouridine synthase TruB family. Type 1 subfamily.

The catalysed reaction is uridine(55) in tRNA = pseudouridine(55) in tRNA. Its function is as follows. Responsible for synthesis of pseudouridine from uracil-55 in the psi GC loop of transfer RNAs. The protein is tRNA pseudouridine synthase B of Pseudomonas paraeruginosa (strain DSM 24068 / PA7) (Pseudomonas aeruginosa (strain PA7)).